Reading from the N-terminus, the 247-residue chain is 5-oxoprolinase subunit A (247 aa).

Belongs to the LamB/PxpA family. As to quaternary structure, forms a complex composed of PxpA, PxpB and PxpC.

The catalysed reaction is 5-oxo-L-proline + ATP + 2 H2O = L-glutamate + ADP + phosphate + H(+). Its function is as follows. Catalyzes the cleavage of 5-oxoproline to form L-glutamate coupled to the hydrolysis of ATP to ADP and inorganic phosphate. The polypeptide is 5-oxoprolinase subunit A (Klebsiella pneumoniae subsp. pneumoniae (strain ATCC 700721 / MGH 78578)).